We begin with the raw amino-acid sequence, 129 residues long: Replication initiation control protein YabA (129 aa).

The Zn(2+) site is built by H103, C105, C119, and C122.

It belongs to the YabA family. In terms of assembly, homotetramer. Interacts with both DnaA and DnaN, acting as a bridge between these two proteins. Zn(2+) is required as a cofactor.

It is found in the cytoplasm. The protein resides in the nucleoid. In terms of biological role, involved in control of chromosome replication initiation. Inhibits the cooperative binding of DnaA to the oriC region, thus negatively regulating initiation of chromosome replication. Inhibits the ability of DnaA-ATP to form a helix on DNA; does not disassemble preformed DnaA-DNA helices. Decreases the residence time of DnaA on the chromosome at its binding sites (oriC, replication forks and promoter-binding sites). Tethers DnaA to the replication machinery via the DNA polymerase beta sliding clamp subunit (dnaN). Associates with oriC and other DnaA targets on the chromosome in a DnaA-dependent manner. This is Replication initiation control protein YabA from Listeria monocytogenes serotype 4b (strain CLIP80459).